Here is a 578-residue protein sequence, read N- to C-terminus: GTP diphosphokinase CRSH3, chloroplastic (578 aa).

The transit peptide at 1-45 (MANAGVNETVAVAVAIDAPGVGHDHGAAGEVRRPSTRRLAPAGSG) directs the protein to the chloroplast. Residues 99–199 (SVSRALVVAA…LELAVKLDAM (101 aa)) enclose the HD domain. 2 consecutive EF-hand domains span residues 468-503 (ATAG…LGAG) and 506-537 (DAEE…VKLK). The Ca(2+) site is built by aspartate 481, asparagine 483, aspartate 485, arginine 487, glutamate 492, aspartate 515, asparagine 517, aspartate 519, serine 521, and glutamate 526.

The protein belongs to the RelA/SpoT family. As to expression, expressed in roots and shoots.

Its subcellular location is the plastid. The protein resides in the chloroplast. The catalysed reaction is GTP + ATP = guanosine 3'-diphosphate 5'-triphosphate + AMP. Its activity is regulated as follows. Activated by calcium. Functionally, possesses calcium-dependent ppGpp (guanosine 3'-diphosphate 5'-diphosphate) synthetase activity in vitro and is able to functionally complement E.coli relA mutants. May be involved in a rapid plant ppGpp-mediated response to pathogens and other stresses. The chain is GTP diphosphokinase CRSH3, chloroplastic from Oryza sativa subsp. japonica (Rice).